We begin with the raw amino-acid sequence, 209 residues long: MKPLTPRQQEVFDLIKSKIDETGMPPTRAEIAKELGFRSANAAEEHLKALARKQVIEMVPGASRGIRILVDNAANEEEAETGLPLIGRVAAGEPILAQEHVEAHYQVDPSMFRPQADFLLRVHGESMKNIGILDGDLLAVHKTQDVRNGQVVVARVEDDVTVKRLERKGSKVFLHAENEEFAPIEVDLAAQSLTIEGIAVGVIRNSTWM.

Positions 28–48 form a DNA-binding region, H-T-H motif; it reads RAEIAKELGFRSANAAEEHLK. Active-site for autocatalytic cleavage activity residues include serine 126 and lysine 163.

Belongs to the peptidase S24 family. In terms of assembly, homodimer.

It catalyses the reaction Hydrolysis of Ala-|-Gly bond in repressor LexA.. Its function is as follows. Represses a number of genes involved in the response to DNA damage (SOS response), including recA and lexA. In the presence of single-stranded DNA, RecA interacts with LexA causing an autocatalytic cleavage which disrupts the DNA-binding part of LexA, leading to derepression of the SOS regulon and eventually DNA repair. In Vibrio cholerae serotype O1 (strain ATCC 39541 / Classical Ogawa 395 / O395), this protein is LexA repressor.